Here is a 424-residue protein sequence, read N- to C-terminus: L-threonine:uridine-5'-aldehyde transaldolase (424 aa).

An N6-(pyridoxal phosphate)lysine modification is found at Lys235.

It belongs to the SHMT family. The cofactor is pyridoxal 5'-phosphate.

The catalysed reaction is uridine-5'-aldehyde + L-threonine = (5'S,6'S)-C-glycyluridine + acetaldehyde. Its pathway is antibiotic biosynthesis. Transaldolase involved in the biosynthesis of the lipopeptidyl nucleoside antibiotic A-90289. Catalyzes the condensation of L-threonine and uridine-5'-aldehyde to form 5'-C-glycyluridine (GlyU). Forms (5'S,6'S)-GlyU. Has no activity with alternative amino acids, such as glycine or serine. The protein is L-threonine:uridine-5'-aldehyde transaldolase of Streptomyces sp.